The sequence spans 227 residues: Large ribosomal subunit protein uL3 (227 aa).

Residues 144-166 (RRGPMAHGSKNHRLPGSTGPGTT) form a disordered region.

This sequence belongs to the universal ribosomal protein uL3 family. In terms of assembly, part of the 50S ribosomal subunit. Forms a cluster with proteins L14 and L19.

Functionally, one of the primary rRNA binding proteins, it binds directly near the 3'-end of the 23S rRNA, where it nucleates assembly of the 50S subunit. In Trichodesmium erythraeum (strain IMS101), this protein is Large ribosomal subunit protein uL3.